A 776-amino-acid chain; its full sequence is MTTIHTLGYPRIGAQRELKFALESFWKGASTEADLRDTGRALRERHWNAQRDAGLDFVTVGDFAWYDQVLQTAALLGALPTRYGFDPAQLTLAQSFVLARGNADHAAMEMTKWFDTNYHYLVPELTPDLRFGPGTGWLFDEVREAQAAGHRVKVALLGPVTFLHLAKARGGLADKLSLLPQLLPAYAAVLKRLAAEGVEWVQIDEPALVLDLPQAWSDAYGPAYATLAAAGGPRLLLATYFEAASHHAALIRSLPVAGVHLDLVRAPQQLEAFAPWPADKVLSAGVVDGRNIWRTDLEQALARVAPLAQTLGERLWLAPSCSLLHVPVDLAAETRLDDELKGWLAFARQKLDELAVLKRAVIDGRDAAHAALAGSAAAIASRAASRRVHNDSVKKRAAAIRAQDAERAAPYPVRAAAQQARLNLPLLPTTTIGSFPQTAEIRQARAQYKRGELQALTYLERMRAEIADVVQRQEALGLDMLVHGEAERNDMVEYFGELLWGYAFTANGWVQSYGSRCVKPPVIYGDVYRPEPMTVEWSRYAQSLTAKPMKGMLTGPVTMLQWSFVRDDQPREQTALQIALALRDEVRDLEAAGIAAIQIDEPAFREGLPLRAGDVAVYLEWAARVFRVSASGVRNDTQIHTHMCYSEFNDILPAIASMDADVITIETSRSNMELLDAFGEFAYPNEIGPGVYDIHSPRVPRVEEMEALLDKAAQVVPVQRLWVNPDCGLKTRGWPEVEAALRGMVEATRRLRARHAGAVHAGTPATRAEHAESALA.

5-methyltetrahydropteroyltri-L-glutamate-binding positions include 16–19 and Lys-112; that span reads RELK. L-homocysteine contacts are provided by residues 432–434 and Glu-485; that span reads IGS. L-methionine-binding positions include 432 to 434 and Glu-485; that span reads IGS. Residues 516–517 and Trp-562 each bind 5-methyltetrahydropteroyltri-L-glutamate; that span reads RC. Residue Asp-600 coordinates L-homocysteine. Asp-600 serves as a coordination point for L-methionine. A 5-methyltetrahydropteroyltri-L-glutamate-binding site is contributed by Glu-606. Positions 642, 644, and 666 each coordinate Zn(2+). The active-site Proton donor is His-695. Zn(2+) is bound at residue Cys-727. Residues 755-776 are disordered; that stretch reads HAGAVHAGTPATRAEHAESALA. The segment covering 767–776 has biased composition (basic and acidic residues); that stretch reads RAEHAESALA.

It belongs to the vitamin-B12 independent methionine synthase family. Requires Zn(2+) as cofactor.

The enzyme catalyses 5-methyltetrahydropteroyltri-L-glutamate + L-homocysteine = tetrahydropteroyltri-L-glutamate + L-methionine. It functions in the pathway amino-acid biosynthesis; L-methionine biosynthesis via de novo pathway; L-methionine from L-homocysteine (MetE route): step 1/1. Catalyzes the transfer of a methyl group from 5-methyltetrahydrofolate to homocysteine resulting in methionine formation. The sequence is that of 5-methyltetrahydropteroyltriglutamate--homocysteine methyltransferase from Ralstonia nicotianae (strain ATCC BAA-1114 / GMI1000) (Ralstonia solanacearum).